The sequence spans 193 residues: Rho-related GTP-binding protein RhoA-A (193 aa).

GTP contacts are provided by residues 12–19 (GDGACGKT), 30–37 (FPEVYVPT), 59–63 (DTAGQ), 117–120 (NKKD), and 160–162 (SAK). A glycan ((Microbial infection) O-linked (GlcNAc) tyrosine; by Yersinia Afp18) is linked at tyrosine 34. Position 190 is a cysteine methyl ester (cysteine 190). Cysteine 190 is lipidated: S-geranylgeranyl cysteine. Residues 191–193 (ALL) constitute a propeptide, removed in mature form.

Belongs to the small GTPase superfamily. Rho family. Post-translationally, (Microbial infection) Glycosylated at Tyr-34 by Yersinia ruckeri toxin Afp18. Mono-O-GlcNAcylation by Afp18 inhibits RhoA activation by guanine nucleotide exchange factors and blocks RhoA signaling.

The protein resides in the cell membrane. Regulates a signal transduction pathway linking plasma membrane receptors to the assembly of focal adhesions and actin stress fibers. In Danio rerio (Zebrafish), this protein is Rho-related GTP-binding protein RhoA-A.